Here is a 290-residue protein sequence, read N- to C-terminus: Pantothenate synthetase (290 aa).

34–41 (MGNLHDGH) contributes to the ATP binding site. The active-site Proton donor is the His-41. Gln-65 is a binding site for (R)-pantoate. Residue Gln-65 coordinates beta-alanine. Residue 156–159 (GKKD) coordinates ATP. Gln-162 is a (R)-pantoate binding site. Residues Ala-185 and 193-196 (LSSR) each bind ATP.

This sequence belongs to the pantothenate synthetase family. As to quaternary structure, homodimer.

The protein resides in the cytoplasm. It catalyses the reaction (R)-pantoate + beta-alanine + ATP = (R)-pantothenate + AMP + diphosphate + H(+). Its pathway is cofactor biosynthesis; (R)-pantothenate biosynthesis; (R)-pantothenate from (R)-pantoate and beta-alanine: step 1/1. Its function is as follows. Catalyzes the condensation of pantoate with beta-alanine in an ATP-dependent reaction via a pantoyl-adenylate intermediate. In Acidovorax ebreus (strain TPSY) (Diaphorobacter sp. (strain TPSY)), this protein is Pantothenate synthetase.